The sequence spans 478 residues: Oxidative stress-induced growth inhibitor 1 (478 aa).

Phosphoserine is present on Ser-12.

This sequence belongs to the OKL38 family. NADPH is required as a cofactor.

The protein resides in the midbody. In terms of biological role, monooxygenase catalytic activity. Involved in regulation of cytokinesis; promotes RHOA activity, probably acting locally at the midbody in late cytokinesis. Monooxygenase activity is involved in stabilizing transient structures between daughter cells, termed intercellular bridges, before abscission. Regulates differentiation and proliferation through the regulation of cell death. In Mus musculus (Mouse), this protein is Oxidative stress-induced growth inhibitor 1.